The primary structure comprises 1212 residues: Peregrin (1212 aa).

The C2H2-type zinc finger occupies 21–47; sequence YECPVETCRKVYKSYSGIEYHLYHYDH. Disordered stretches follow at residues 43–87 and 118–176; these read YHYD…SPGR and VVSE…PKLP. Over residues 58 to 67 the composition is skewed to basic residues; sequence LRKHKKKGRQ. The tract at residues 59–221 is interaction with KAT6A and KAT6B; sequence RKHKKKGRQS…VEYDMDEEDY (163 aa). Over residues 74 to 85 the composition is skewed to low complexity; it reads QSPSPSEVSQSP. The segment covering 119–130 has biased composition (acidic residues); sequence VSEDEEAPEEAP. Position 120 is a phosphoserine (Ser120). Position 147 is an N6-acetyllysine (Lys147). Residues 148-166 are compositionally biased toward basic residues; that stretch reads SGKHKNKEKRKDSNHHHHS. The residue at position 237 (Ser237) is a Phosphoserine. Residues 272–322 form a PHD-type 1 zinc finger; sequence DAVCCICNDGECQNSNVILFCDMCNLAVHQECYGVPYIPEGQWLCRRCLQS. Residues 326–359 form a C2HC pre-PHD-type zinc finger; sequence AVDCALCPNKGGAFKQTDDGRWAHVVCALWIPEV. The segment at 383–447 adopts a PHD-type 2 zinc-finger fold; it reads LTCYICKQRG…RKTAYCDIHT (65 aa). Residues 447-489 are disordered; it reads TPPGSARRLPALSHSEGEEEEDEEEDEGKSWSSEKVKKAKAKS. Phosphoserine occurs at positions 459 and 461. Positions 463–473 are enriched in acidic residues; sequence GEEEEDEEEDE. The interval 500 to 819 is interaction with MEAF6 and ING5; the sequence is LAEKRAAAPV…IKKEMTALRR (320 aa). The required for RUNX1 and RUNX2 transcriptional activation stretch occupies residues 542–1077; that stretch reads YWTLKRQSRN…RGAGWLSEDE (536 aa). Lys579 is subject to N6-acetyllysine. Residues 627–731 enclose the Bromo domain; the sequence is MQLTPFLILL…EQGGAVLRQA (105 aa). Residues 817–1060 are disordered; sequence LRRKLAHQRE…VGTGRGVGHS (244 aa). Residues 823 to 836 show a composition bias toward basic and acidic residues; the sequence is HQRETGRDGPERHG. A Phosphothreonine modification is found at Thr856. Residues 856–869 show a composition bias toward low complexity; sequence TDSAAEESSSQETS. A phosphoserine mark is found at Ser858, Ser915, Ser920, and Ser924. Positions 993–1019 are enriched in low complexity; it reads PRSSSDSESSSSSSSSAASDRTSTTPS. Phosphoserine is present on Ser1074. Positions 1083–1166 constitute a PWWP domain; it reads ALDLVWAKCR…RTKLVPLGVN (84 aa). Position 1185 is a phosphoserine (Ser1185).

In terms of assembly, component of some HBO1 complex composed of KAT7/HBO1, MEAF6, ING5, and BRPF1. Component of the MOZ/MORF complex composed at least of ING5, KAT6A, KAT6B, MEAF6 and one of BRPF1, BRD1/BRPF2 and BRPF3. Interacts (via PHD-type zinc finger domains) with unmethylated histone H3 at 'Lys-4' (H3K4me0). Interacts with trimethylated 'Lys-36' of histone H3 (H3K36me3). Interacts with ING5; interaction directs BRPF1 to H4K4me3-enriched chromatin at the 5' of active genes. Interacts with KAT7. Post-translationally, acetylated by KAT6A. Expressed at low level in most tissues, with high expression in the testis and specific regions of the brain.

It localises to the nucleus. It is found in the chromosome. The protein resides in the cytoplasm. Functionally, scaffold subunit of various histone acetyltransferase (HAT) complexes, such as the MOZ/MORF and HBO1 complexes, which have a histone H3 acetyltransferase activity. Plays a key role in HBO1 complex by directing KAT7/HBO1 specificity towards histone H3 'Lys-14' acetylation (H3K14ac). Some HAT complexes preferentially mediate histone H3 'Lys-23' (H3K23ac) acetylation. Positively regulates the transcription of RUNX1 and RUNX2. This is Peregrin from Mus musculus (Mouse).